Consider the following 216-residue polypeptide: Uracil phosphoribosyltransferase (216 aa).

5-phospho-alpha-D-ribose 1-diphosphate contacts are provided by residues Arg-85, Arg-110, and 135 to 143 (DPMVATGYS). Uracil is bound by residues Ile-200 and 205-207 (GDA). Asp-206 contacts 5-phospho-alpha-D-ribose 1-diphosphate.

This sequence belongs to the UPRTase family. Mg(2+) is required as a cofactor.

The enzyme catalyses UMP + diphosphate = 5-phospho-alpha-D-ribose 1-diphosphate + uracil. The protein operates within pyrimidine metabolism; UMP biosynthesis via salvage pathway; UMP from uracil: step 1/1. Allosterically activated by GTP. Functionally, catalyzes the conversion of uracil and 5-phospho-alpha-D-ribose 1-diphosphate (PRPP) to UMP and diphosphate. The chain is Uracil phosphoribosyltransferase from Burkholderia cenocepacia (strain ATCC BAA-245 / DSM 16553 / LMG 16656 / NCTC 13227 / J2315 / CF5610) (Burkholderia cepacia (strain J2315)).